Here is a 479-residue protein sequence, read N- to C-terminus: tRNA-2-methylthio-N(6)-dimethylallyladenosine synthase (479 aa).

The MTTase N-terminal domain occupies 3–120; the sequence is KKLYIKTWGC…LPEMVNQVSE (118 aa). [4Fe-4S] cluster-binding residues include cysteine 12, cysteine 49, cysteine 83, cysteine 157, cysteine 161, and cysteine 164. Residues 143–375 form the Radical SAM core domain; it reads KADGASAFVS…QQRLNQQSMA (233 aa). The 64-residue stretch at 378-441 folds into the TRAM domain; that stretch reads RRMLETEQRI…PNSLRGELIR (64 aa).

The protein belongs to the methylthiotransferase family. MiaB subfamily. As to quaternary structure, monomer. [4Fe-4S] cluster is required as a cofactor.

It is found in the cytoplasm. The catalysed reaction is N(6)-dimethylallyladenosine(37) in tRNA + (sulfur carrier)-SH + AH2 + 2 S-adenosyl-L-methionine = 2-methylsulfanyl-N(6)-dimethylallyladenosine(37) in tRNA + (sulfur carrier)-H + 5'-deoxyadenosine + L-methionine + A + S-adenosyl-L-homocysteine + 2 H(+). Its function is as follows. Catalyzes the methylthiolation of N6-(dimethylallyl)adenosine (i(6)A), leading to the formation of 2-methylthio-N6-(dimethylallyl)adenosine (ms(2)i(6)A) at position 37 in tRNAs that read codons beginning with uridine. In Idiomarina loihiensis (strain ATCC BAA-735 / DSM 15497 / L2-TR), this protein is tRNA-2-methylthio-N(6)-dimethylallyladenosine synthase.